A 74-amino-acid polypeptide reads, in one-letter code: Large ribosomal subunit protein bL31 (74 aa).

Zn(2+) is bound by residues Cys-17, Cys-19, Cys-38, and Cys-41.

This sequence belongs to the bacterial ribosomal protein bL31 family. Type A subfamily. As to quaternary structure, part of the 50S ribosomal subunit. Zn(2+) serves as cofactor.

Functionally, binds the 23S rRNA. This is Large ribosomal subunit protein bL31 from Gloeobacter violaceus (strain ATCC 29082 / PCC 7421).